A 42-amino-acid chain; its full sequence is uncharacterized protein (42 aa).

A disordered region spans residues 1–42 (MTTGKPQSFEKMRTPFPGRSKAKGPQSDIIPSAPPNTPVTEH). Pro residues predominate over residues 32-42 (SAPPNTPVTEH).

This is an uncharacterized protein from Schizosaccharomyces pombe (strain 972 / ATCC 24843) (Fission yeast).